A 165-amino-acid polypeptide reads, in one-letter code: Pro-MCH (165 aa).

Residues 1-21 (MAKMNLSSYILILTFSLFSQG) form the signal peptide. Isoleucine amide is present on Ile143. A disulfide bridge links Cys153 with Cys162.

The protein belongs to the melanin-concentrating hormone family. Differentially processed in the brain and in peripheral organs producing two neuropeptides; NEI and MCH. A third peptide, NGE, may also be produced. Preferential processing in neurons by prohormone convertase 2 (PC2) generates NEI. MCH is generated in neurons of the lateral hypothalmic area by several prohormone convertases including PC1/3, PC2 and PC5/6. As to expression, predominantly expressed in lateral hypothalamus, also detected in pallidum, neocortex and cerebellum. Also found in thymus, brown adipose tissue, duodenum and testis (spermatogonia, early spermatocytes and Sertoli cells). No expression in peripheral blood. In brain exclusively mature MCH and NEI peptides are present. In peripheral tissues a large product, encompassing the NEI and MCH domains of the precursor, is found predominantly.

It is found in the secreted. MCH may act as a neurotransmitter or neuromodulator in a broad array of neuronal functions directed toward the regulation of goal-directed behavior, such as food intake, and general arousal. May also have a role in spermatocyte differentiation. The polypeptide is Pro-MCH (PMCH) (Homo sapiens (Human)).